The sequence spans 651 residues: Acetyl-coenzyme A synthetase (651 aa).

CoA-binding positions include 189–192, Thr311, and Asn335; that span reads RGGK. ATP is bound by residues 387 to 389, 411 to 416, Asp500, and Arg515; these read GEP and DTWWQT. CoA is bound at residue Ser523. Arg526 contacts ATP. Positions 537, 539, and 542 each coordinate Mg(2+). Arg586 lines the CoA pocket. Residue Lys611 is modified to N6-acetyllysine.

This sequence belongs to the ATP-dependent AMP-binding enzyme family. Mg(2+) is required as a cofactor. Post-translationally, acetylated. Deacetylation by the SIR2-homolog deacetylase activates the enzyme.

It catalyses the reaction acetate + ATP + CoA = acetyl-CoA + AMP + diphosphate. In terms of biological role, catalyzes the conversion of acetate into acetyl-CoA (AcCoA), an essential intermediate at the junction of anabolic and catabolic pathways. AcsA undergoes a two-step reaction. In the first half reaction, AcsA combines acetate with ATP to form acetyl-adenylate (AcAMP) intermediate. In the second half reaction, it can then transfer the acetyl group from AcAMP to the sulfhydryl group of CoA, forming the product AcCoA. The sequence is that of Acetyl-coenzyme A synthetase from Brucella melitensis biotype 2 (strain ATCC 23457).